We begin with the raw amino-acid sequence, 919 residues long: Valine--tRNA ligase (919 aa).

The 'HIGH' region signature appears at Pro-46 to His-56. Residues Lys-528–Ser-532 carry the 'KMSKS' region motif. Lys-531 lines the ATP pocket. The stretch at Leu-849–Gly-919 forms a coiled coil.

It belongs to the class-I aminoacyl-tRNA synthetase family. ValS type 1 subfamily. As to quaternary structure, monomer.

It localises to the cytoplasm. It carries out the reaction tRNA(Val) + L-valine + ATP = L-valyl-tRNA(Val) + AMP + diphosphate. Catalyzes the attachment of valine to tRNA(Val). As ValRS can inadvertently accommodate and process structurally similar amino acids such as threonine, to avoid such errors, it has a 'posttransfer' editing activity that hydrolyzes mischarged Thr-tRNA(Val) in a tRNA-dependent manner. The sequence is that of Valine--tRNA ligase from Francisella tularensis subsp. tularensis (strain SCHU S4 / Schu 4).